The chain runs to 206 residues: N-(5'-phosphoribosyl)anthranilate isomerase (206 aa).

It belongs to the TrpF family.

The enzyme catalyses N-(5-phospho-beta-D-ribosyl)anthranilate = 1-(2-carboxyphenylamino)-1-deoxy-D-ribulose 5-phosphate. It participates in amino-acid biosynthesis; L-tryptophan biosynthesis; L-tryptophan from chorismate: step 3/5. The chain is N-(5'-phosphoribosyl)anthranilate isomerase from Nitrosococcus oceani (strain ATCC 19707 / BCRC 17464 / JCM 30415 / NCIMB 11848 / C-107).